We begin with the raw amino-acid sequence, 252 residues long: Phosphoribosylaminoimidazole-succinocarboxamide synthase 1 (252 aa).

The protein belongs to the SAICAR synthetase family.

It carries out the reaction 5-amino-1-(5-phospho-D-ribosyl)imidazole-4-carboxylate + L-aspartate + ATP = (2S)-2-[5-amino-1-(5-phospho-beta-D-ribosyl)imidazole-4-carboxamido]succinate + ADP + phosphate + 2 H(+). It participates in purine metabolism; IMP biosynthesis via de novo pathway; 5-amino-1-(5-phospho-D-ribosyl)imidazole-4-carboxamide from 5-amino-1-(5-phospho-D-ribosyl)imidazole-4-carboxylate: step 1/2. In Caulobacter vibrioides (strain ATCC 19089 / CIP 103742 / CB 15) (Caulobacter crescentus), this protein is Phosphoribosylaminoimidazole-succinocarboxamide synthase 1 (purC1).